The primary structure comprises 178 residues: Ribosome maturation factor RimM (178 aa).

The PRC barrel domain maps to 101 to 178; sequence ADEYYWYQLV…VMRVEWDADF (78 aa).

Belongs to the RimM family. Binds ribosomal protein uS19.

The protein resides in the cytoplasm. In terms of biological role, an accessory protein needed during the final step in the assembly of 30S ribosomal subunit, possibly for assembly of the head region. Essential for efficient processing of 16S rRNA. May be needed both before and after RbfA during the maturation of 16S rRNA. It has affinity for free ribosomal 30S subunits but not for 70S ribosomes. The sequence is that of Ribosome maturation factor RimM from Pseudomonas putida (strain GB-1).